The sequence spans 1460 residues: CLIP-associating protein 1-A (1460 aa).

HEAT repeat units lie at residues 87 to 124 (TQLGTVLPSLMDRLGDAKDSVREQDQSLLIKIMEQASN) and 163 to 200 (LTLSKIVPHICNLLGDPNSQVRDAAINCLVEIYRHVGE). The disordered stretch occupies residues 237–293 (SDKNFDDEDSVDGNRPSSASSSASSKAPQTARRGVSLGTARRPGPSSAAAKTGGTAK). A compositionally biased stretch (low complexity) spans 279 to 293 (PGPSSAAAKTGGTAK). HEAT repeat units lie at residues 407-442 (HGAEAIMPTVFNLVPNSAKIMATSGIVAIRLIIRHT) and 443-479 (HVPRLIPIITSNCTSKSVAVRRRCYDFLDLLLQEWQT). Disordered regions lie at residues 545-605 (SDSI…IDVN), 640-733 (IRTR…RFGI), and 778-800 (PYGMYSDDDANSDASSACSERSY). Over residues 550–569 (SLPQSDRSSSSSQESLNRPL) the composition is skewed to low complexity. The span at 571 to 597 (TKRSPTGSTVSRASSTTSKSTPGSLQR) shows a compositional bias: polar residues. Low complexity predominate over residues 645 to 659 (QSSGSTTSTASTPAD). Polar residues-rich tracts occupy residues 669 to 681 (VSQSQPGSRSNSP) and 715 to 724 (QGCSRETSPS). Over residues 789-800 (SDASSACSERSY) the composition is skewed to low complexity. The stretch at 942–979 (FIVDQTQTPNLKVKVAILKYIESLARQMDPTDFVNSSE) is one HEAT 5 repeat. The disordered stretch occupies residues 1041–1084 (LKNSSNSSMGSPSNTIGRTPSRHSSSRASPLTSPTNCSHGGLSP). The span at 1042–1054 (KNSSNSSMGSPSN) shows a compositional bias: low complexity. A compositionally biased stretch (polar residues) spans 1066–1078 (SRASPLTSPTNCS). 2 HEAT repeats span residues 1272–1309 (LLLETLGDKDHAIRALALRVLREILRNQPARFKNYAEL) and 1390–1427 (GLLQGYDNTESSVRKASVFCLVAIYSVIGEELKPYLAQ).

It belongs to the CLASP family.

It localises to the cytoplasm. The protein localises to the cytoskeleton. The protein resides in the microtubule organizing center. Its subcellular location is the centrosome. It is found in the chromosome. It localises to the centromere. The protein localises to the kinetochore. The protein resides in the spindle. Its subcellular location is the golgi apparatus. It is found in the trans-Golgi network. Microtubule plus-end tracking protein that promotes the stabilization of dynamic microtubules during anaphase. Plays a crucial role in chromatin-induced microtubule formation. May also act at microtubule minus ends. May be involved in the nucleation of noncentrosomal microtubules originating from the trans-Golgi network (TGN). The sequence is that of CLIP-associating protein 1-A (clasp1-a) from Xenopus laevis (African clawed frog).